The primary structure comprises 342 residues: Cytochrome c oxidase subunit 2 (342 aa).

An N-terminal signal peptide occupies residues 1–22 (MKLWKTASRFLPLSFLTLFLTG). The N-palmitoyl cysteine moiety is linked to residue Cys23. The S-diacylglycerol cysteine moiety is linked to residue Cys23. At 23 to 50 (CLGEENLTALDPKGPQAQWIYDNMILSI) the chain is on the extracellular side. The cytochrome c oxidase subunit II stretch occupies residues 23–249 (CLGEENLTAL…MSAEVEEPTE (227 aa)). A helical transmembrane segment spans residues 51-69 (IVMALVSIVVFAIFFIILA). The Cytoplasmic portion of the chain corresponds to 70–89 (KYRRKPGDDEIPKQVHGNTA). The helical transmembrane segment at 90–108 (LEITWTVIPIILLVILAVP) threads the bilayer. Residues 109-342 (TITGTFMFAD…AYLRSLKVME (234 aa)) lie on the Extracellular side of the membrane. Residues His175, Cys210, Cys214, and His218 each coordinate Cu cation. The Cytochrome c domain occupies 250–342 (TLANQGRQVF…AYLRSLKVME (93 aa)). Positions 264, 267, 268, and 317 each coordinate heme c.

Belongs to the cytochrome c oxidase subunit 2 family. It depends on Cu cation as a cofactor. Heme c serves as cofactor.

It localises to the cell membrane. It carries out the reaction 4 Fe(II)-[cytochrome c] + O2 + 8 H(+)(in) = 4 Fe(III)-[cytochrome c] + 2 H2O + 4 H(+)(out). In terms of biological role, subunits I and II form the functional core of the enzyme complex. Electrons originating in cytochrome c are transferred via heme a and Cu(A) to the binuclear center formed by heme a3 and Cu(B). This is Cytochrome c oxidase subunit 2 (ctaC) from Alkalihalophilus pseudofirmus (strain ATCC BAA-2126 / JCM 17055 / OF4) (Bacillus pseudofirmus).